We begin with the raw amino-acid sequence, 222 residues long: Uracil-DNA glycosylase (222 aa).

The active-site Proton acceptor is the D66.

This sequence belongs to the uracil-DNA glycosylase (UDG) superfamily. UNG family.

The protein resides in the cytoplasm. The enzyme catalyses Hydrolyzes single-stranded DNA or mismatched double-stranded DNA and polynucleotides, releasing free uracil.. Excises uracil residues from the DNA which can arise as a result of misincorporation of dUMP residues by DNA polymerase or due to deamination of cytosine. In Porphyromonas gingivalis (strain ATCC 33277 / DSM 20709 / CIP 103683 / JCM 12257 / NCTC 11834 / 2561), this protein is Uracil-DNA glycosylase.